A 422-amino-acid chain; its full sequence is Oxysterol-binding protein 7 (422 aa).

Residues 283-313 (EAAPASSASKKEKKKEKKKAKHSKHTCSPSD) form a disordered region. Residues 293 to 307 (KEKKKEKKKAKHSKH) are compositionally biased toward basic residues. A coiled-coil region spans residues 354–384 (MQAADQIKKEIEDEQRKRLQITKEEEKKERA). The tract at residues 402–422 (TLAPVSNSTSSTASDAASGSN) is disordered. Residues 407–422 (SNSTSSTASDAASGSN) show a composition bias toward low complexity.

Belongs to the OSBP family.

The protein is Oxysterol-binding protein 7 (osbG) of Dictyostelium discoideum (Social amoeba).